A 161-amino-acid polypeptide reads, in one-letter code: Large ribosomal subunit protein uL16 (161 aa).

The segment at 140–161 is disordered; it reads LNKGNYKPAKTPVTADDSESSS.

The protein belongs to the universal ribosomal protein uL16 family. As to quaternary structure, part of the 50S ribosomal subunit.

Functionally, binds 23S rRNA and is also seen to make contacts with the A and possibly P site tRNAs. The polypeptide is Large ribosomal subunit protein uL16 (Prochlorococcus marinus (strain NATL2A)).